We begin with the raw amino-acid sequence, 518 residues long: MTHLRFDNRLRQQLPGDPEEGSRRREVSVAWSAVLPTPVAAPSLIAHSAEMAQVLGLDAAEIASAQFAQVFGGNALYPGMQPWAVNYGGHQFGHWAGQLGDGRAISLGEAIGTDGGRYELQLKGAGPTPYSRGADGRAVLRSSIREFLCSEAMHHLGVPTTRALSLVGTGDAVVRDMFYDGHPQREPGAIVCRVAPSFIRFGNFELPSARGDIALLRQWVDFTIARDFPALAGAGEALYAGWFAQVCERTAVMVAHWMRVGFVHGVMNTDNMSILGLTIDYGPYGWVDDYDPDWTPNTTDAQGRRYRFGTQPQVAYWNLGRLAQALAPLFPDQAPLQHGLDRFRDTYLACDRHDTAAKLGLAECRDEDLQLIDALRALMRESEMDMTLTFRGLIDLSPDHPDPAQLREAFYDEDKRVADAPQLQQWLQRYAARLQQDPLPPDARRARMRLANPRYVLRNYLAQQAIDRAEQGDPSGVQELLEVMRHPYDDQPGRDAFAARRPEWARDRAGCSMLSCSS.

Over residues 1–10 the composition is skewed to basic and acidic residues; that stretch reads MTHLRFDNRL. The disordered stretch occupies residues 1-23; that stretch reads MTHLRFDNRLRQQLPGDPEEGSR. Residues Gly100, Gly102, Arg103, Lys123, Asp135, Gly136, Arg193, and Arg200 each coordinate ATP. Residue Asp270 is the Proton acceptor of the active site. Mg(2+)-binding residues include Asn271 and Asp280. An ATP-binding site is contributed by Asp280.

Belongs to the SELO family. Mg(2+) is required as a cofactor. Requires Mn(2+) as cofactor.

The enzyme catalyses L-seryl-[protein] + ATP = 3-O-(5'-adenylyl)-L-seryl-[protein] + diphosphate. It carries out the reaction L-threonyl-[protein] + ATP = 3-O-(5'-adenylyl)-L-threonyl-[protein] + diphosphate. The catalysed reaction is L-tyrosyl-[protein] + ATP = O-(5'-adenylyl)-L-tyrosyl-[protein] + diphosphate. It catalyses the reaction L-histidyl-[protein] + UTP = N(tele)-(5'-uridylyl)-L-histidyl-[protein] + diphosphate. The enzyme catalyses L-seryl-[protein] + UTP = O-(5'-uridylyl)-L-seryl-[protein] + diphosphate. It carries out the reaction L-tyrosyl-[protein] + UTP = O-(5'-uridylyl)-L-tyrosyl-[protein] + diphosphate. Its function is as follows. Nucleotidyltransferase involved in the post-translational modification of proteins. It can catalyze the addition of adenosine monophosphate (AMP) or uridine monophosphate (UMP) to a protein, resulting in modifications known as AMPylation and UMPylation. This chain is Protein nucleotidyltransferase YdiU, found in Xanthomonas axonopodis pv. citri (strain 306).